Consider the following 195-residue polypeptide: Morphogenetic protein (195 aa).

Functionally, assembly factor active in membrane morphogenesis. The chain is Morphogenetic protein (P12) from Pseudomonas phage phi6 (Bacteriophage phi-6).